The chain runs to 225 residues: Uracil-DNA glycosylase (225 aa).

Catalysis depends on aspartate 65, which acts as the Proton acceptor.

This sequence belongs to the uracil-DNA glycosylase (UDG) superfamily. UNG family.

The protein resides in the cytoplasm. It catalyses the reaction Hydrolyzes single-stranded DNA or mismatched double-stranded DNA and polynucleotides, releasing free uracil.. Excises uracil residues from the DNA which can arise as a result of misincorporation of dUMP residues by DNA polymerase or due to deamination of cytosine. The sequence is that of Uracil-DNA glycosylase from Clostridium beijerinckii (strain ATCC 51743 / NCIMB 8052) (Clostridium acetobutylicum).